A 585-amino-acid chain; its full sequence is Probable ubiquitin carboxyl-terminal hydrolase 9 (585 aa).

The interval 1-23 (MSLLRWMGMNSPGSTDRRKSTWE) is disordered. The USP domain occupies 41 to 424 (YGLTNYGNTC…TAYVLFYTAA (384 aa)). Catalysis depends on C50, which acts as the Nucleophile. The tract at residues 85–110 (CTKTNHPESSSSRHSKKKSMENRKSS) is disordered. Residue H375 is the Proton acceptor of the active site. Positions 447–470 (SQLKQESVEVSNLSSTPRSNSTIT) are enriched in polar residues. Residues 447–473 (SQLKQESVEVSNLSSTPRSNSTITYPD) form a disordered region. S505 bears the Phosphoserine mark. 2 disordered regions span residues 511-530 (FHSRSVDASPKAVRRESRSF) and 540-585 (KFFG…RSKR). Residues 542–551 (FGSSQSNSPK) show a composition bias toward polar residues. A Phosphoserine modification is found at S549. The segment covering 553 to 570 (SPLRDTHKSSDEHSESKH) has biased composition (basic and acidic residues). Residues 574 to 585 (LPWQFSRSRSKR) show a composition bias toward polar residues.

Belongs to the peptidase C19 family. Interacts with bun107 and bun62.

It is found in the nucleus. It localises to the cytoplasm. The protein resides in the cell tip. It carries out the reaction Thiol-dependent hydrolysis of ester, thioester, amide, peptide and isopeptide bonds formed by the C-terminal Gly of ubiquitin (a 76-residue protein attached to proteins as an intracellular targeting signal).. Functionally, ubiquitin C-terminal hydrolase involved in regulating actin dynamics and/or endocytosis at cell tips and septa. The polypeptide is Probable ubiquitin carboxyl-terminal hydrolase 9 (ubp9) (Schizosaccharomyces pombe (strain 972 / ATCC 24843) (Fission yeast)).